A 243-amino-acid polypeptide reads, in one-letter code: Probable transcriptional regulatory protein BDU_30 (243 aa).

The protein belongs to the TACO1 family.

It localises to the cytoplasm. The protein is Probable transcriptional regulatory protein BDU_30 of Borrelia duttonii (strain Ly).